The following is a 366-amino-acid chain: 1-deoxy-D-xylulose 5-phosphate reductoisomerase (366 aa).

Residues threonine 7, glycine 8, serine 9, isoleucine 10, glycine 31, asparagine 33, and asparagine 111 each coordinate NADPH. 1-deoxy-D-xylulose 5-phosphate is bound at residue lysine 112. Residue glutamate 113 participates in NADPH binding. A Mn(2+)-binding site is contributed by aspartate 131. The 1-deoxy-D-xylulose 5-phosphate site is built by serine 132, glutamate 133, serine 162, and histidine 185. Mn(2+) is bound at residue glutamate 133. Glycine 191 provides a ligand contact to NADPH. The 1-deoxy-D-xylulose 5-phosphate site is built by serine 198, asparagine 203, lysine 204, and glutamate 207. Residue glutamate 207 participates in Mn(2+) binding.

The protein belongs to the DXR family. Requires Mg(2+) as cofactor. The cofactor is Mn(2+).

The catalysed reaction is 2-C-methyl-D-erythritol 4-phosphate + NADP(+) = 1-deoxy-D-xylulose 5-phosphate + NADPH + H(+). The protein operates within isoprenoid biosynthesis; isopentenyl diphosphate biosynthesis via DXP pathway; isopentenyl diphosphate from 1-deoxy-D-xylulose 5-phosphate: step 1/6. Its function is as follows. Catalyzes the NADPH-dependent rearrangement and reduction of 1-deoxy-D-xylulose-5-phosphate (DXP) to 2-C-methyl-D-erythritol 4-phosphate (MEP). The chain is 1-deoxy-D-xylulose 5-phosphate reductoisomerase from Nautilia profundicola (strain ATCC BAA-1463 / DSM 18972 / AmH).